A 561-amino-acid polypeptide reads, in one-letter code: uncharacterized protein (561 aa).

The segment covering 314–323 has biased composition (low complexity); it reads ANNGSGDSSS. The tract at residues 314 to 366 is disordered; that stretch reads ANNGSGDSSSTALNNESPNTTPKSRTFFSPKGHRRNSSHVSSLTSRSTKKPIT. Positions 324–340 are enriched in polar residues; the sequence is TALNNESPNTTPKSRTF. Ser514 is subject to Phosphoserine.

It localises to the cytoplasm. This is an uncharacterized protein from Saccharomyces cerevisiae (strain ATCC 204508 / S288c) (Baker's yeast).